The sequence spans 550 residues: Glucose-6-phosphate isomerase (550 aa).

Glu357 acts as the Proton donor in catalysis. Active-site residues include His388 and Lys516.

It belongs to the GPI family.

Its subcellular location is the cytoplasm. The catalysed reaction is alpha-D-glucose 6-phosphate = beta-D-fructose 6-phosphate. It functions in the pathway carbohydrate biosynthesis; gluconeogenesis. The protein operates within carbohydrate degradation; glycolysis; D-glyceraldehyde 3-phosphate and glycerone phosphate from D-glucose: step 2/4. Its function is as follows. Catalyzes the reversible isomerization of glucose-6-phosphate to fructose-6-phosphate. The protein is Glucose-6-phosphate isomerase of Psychromonas ingrahamii (strain DSM 17664 / CCUG 51855 / 37).